Consider the following 595-residue polypeptide: Putative capsid protein V20 (595 aa).

The protein localises to the virion. In terms of biological role, may self assemble to form an icosahedral capsid. Most abundant protein in the virion. This is Putative capsid protein V20 from Sputnik virophage.